Reading from the N-terminus, the 345-residue chain is MQYKELLHKLLTGTDLSGKEMEECFSGIMLGEYPDSVIAAILALLQKKGVTPEEVAGAYFAIISKALPVQLGDNAVDTCGTGGDQAGTFNISTVAAIIANGAGVPIAKHGNRSVTSRCGSADVLEQLGYRILLPPDKTEMLFRETGFAFLFAPLYHPAMKAVAHIRRELGIKTIFNMLGPLVNPAKVHRQVVGVFDMRVMEIYAQSLIRTGCSHALVVHGKTENGDGLDEASICGPTRIVEIQNGEITCHDVEPETFSLSRCTIAELQGGDSSRNADILLRILDGSATKAQTDAALFSAAMACYVSGRATCIDDGLSKAKGSLESGNASKQFSRILALNAELAGK.

5-phospho-alpha-D-ribose 1-diphosphate-binding positions include G80, 83–84 (GD), T88, 90–93 (NIST), 108–116 (KHGNRSVTS), and S120. G80 contributes to the anthranilate binding site. Mg(2+) is bound at residue S92. Residue N111 participates in anthranilate binding. R166 is an anthranilate binding site. Residues D229 and E230 each coordinate Mg(2+).

This sequence belongs to the anthranilate phosphoribosyltransferase family. In terms of assembly, homodimer. It depends on Mg(2+) as a cofactor.

The catalysed reaction is N-(5-phospho-beta-D-ribosyl)anthranilate + diphosphate = 5-phospho-alpha-D-ribose 1-diphosphate + anthranilate. It functions in the pathway amino-acid biosynthesis; L-tryptophan biosynthesis; L-tryptophan from chorismate: step 2/5. In terms of biological role, catalyzes the transfer of the phosphoribosyl group of 5-phosphorylribose-1-pyrophosphate (PRPP) to anthranilate to yield N-(5'-phosphoribosyl)-anthranilate (PRA). This is Anthranilate phosphoribosyltransferase from Chlorobium phaeobacteroides (strain BS1).